Reading from the N-terminus, the 394-residue chain is 1-deoxy-D-xylulose 5-phosphate reductoisomerase (394 aa).

The NADPH site is built by threonine 12, glycine 13, serine 14, isoleucine 15, glycine 38, asparagine 41, and asparagine 132. Lysine 133 is a 1-deoxy-D-xylulose 5-phosphate binding site. Glutamate 134 lines the NADPH pocket. Position 156 (aspartate 156) interacts with Mn(2+). 1-deoxy-D-xylulose 5-phosphate is bound by residues serine 157, glutamate 158, serine 182, and histidine 205. Glutamate 158 lines the Mn(2+) pocket. NADPH is bound at residue glycine 211. The 1-deoxy-D-xylulose 5-phosphate site is built by serine 218, asparagine 223, lysine 224, and glutamate 227. Glutamate 227 is a Mn(2+) binding site.

This sequence belongs to the DXR family. It depends on Mg(2+) as a cofactor. The cofactor is Mn(2+).

It catalyses the reaction 2-C-methyl-D-erythritol 4-phosphate + NADP(+) = 1-deoxy-D-xylulose 5-phosphate + NADPH + H(+). It functions in the pathway isoprenoid biosynthesis; isopentenyl diphosphate biosynthesis via DXP pathway; isopentenyl diphosphate from 1-deoxy-D-xylulose 5-phosphate: step 1/6. Functionally, catalyzes the NADPH-dependent rearrangement and reduction of 1-deoxy-D-xylulose-5-phosphate (DXP) to 2-C-methyl-D-erythritol 4-phosphate (MEP). In Paenarthrobacter aurescens (strain TC1), this protein is 1-deoxy-D-xylulose 5-phosphate reductoisomerase.